Reading from the N-terminus, the 487-residue chain is Chromosomal replication initiator protein DnaA (487 aa).

The tract at residues 1 to 79 is domain I, interacts with DnaA modulators; that stretch reads MPNSMWHQCL…QAPRVMMKVG (79 aa). A disordered region spans residues 78–138; it reads VGSAPKPTDP…PAPKAQAERR (61 aa). The tract at residues 79–150 is domain II; the sequence is GSAPKPTDPV…QVEGDIKHQS (72 aa). The interval 151-367 is domain III, AAA+ region; that stretch reads FLNETFTFDT…GALRLVIANA (217 aa). ATP is bound by residues glycine 195, glycine 197, lysine 198, and threonine 199. The segment at 368 to 487 is domain IV, binds dsDNA; sequence HFTGSEITPP…YQNFMRLLTT (120 aa).

The protein belongs to the DnaA family. As to quaternary structure, oligomerizes as a right-handed, spiral filament on DNA at oriC.

It localises to the cytoplasm. Its function is as follows. Plays an essential role in the initiation and regulation of chromosomal replication. ATP-DnaA binds to the origin of replication (oriC) to initiate formation of the DNA replication initiation complex once per cell cycle. Binds the DnaA box (a 9 base pair repeat at the origin) and separates the double-stranded (ds)DNA. Forms a right-handed helical filament on oriC DNA; dsDNA binds to the exterior of the filament while single-stranded (ss)DNA is stabiized in the filament's interior. The ATP-DnaA-oriC complex binds and stabilizes one strand of the AT-rich DNA unwinding element (DUE), permitting loading of DNA polymerase. After initiation quickly degrades to an ADP-DnaA complex that is not apt for DNA replication. Binds acidic phospholipids. The polypeptide is Chromosomal replication initiator protein DnaA (Marinobacter nauticus (strain ATCC 700491 / DSM 11845 / VT8) (Marinobacter aquaeolei)).